The primary structure comprises 202 residues: Small ribosomal subunit protein uS4 (202 aa).

A compositionally biased stretch (basic residues) spans 1–13 (MSRYRGPRLRVTR). Positions 1–42 (MSRYRGPRLRVTRRLGELPGLTRKASKKSNPPGQHGQARRKR) are disordered. The region spanning 90-152 (NRLDNVCFRL…KASKKLVEGN (63 aa)) is the S4 RNA-binding domain.

This sequence belongs to the universal ribosomal protein uS4 family. Part of the 30S ribosomal subunit. Contacts protein S5. The interaction surface between S4 and S5 is involved in control of translational fidelity.

In terms of biological role, one of the primary rRNA binding proteins, it binds directly to 16S rRNA where it nucleates assembly of the body of the 30S subunit. With S5 and S12 plays an important role in translational accuracy. The protein is Small ribosomal subunit protein uS4 of Prochlorococcus marinus (strain AS9601).